The primary structure comprises 117 residues: Large ribosomal subunit protein bL20c (117 aa).

The protein belongs to the bacterial ribosomal protein bL20 family.

Its subcellular location is the plastid. It is found in the chloroplast. Its function is as follows. Binds directly to 23S ribosomal RNA and is necessary for the in vitro assembly process of the 50S ribosomal subunit. It is not involved in the protein synthesizing functions of that subunit. The sequence is that of Large ribosomal subunit protein bL20c from Aethionema grandiflorum (Persian stone-cress).